A 750-amino-acid polypeptide reads, in one-letter code: Photosystem I P700 chlorophyll a apoprotein A1 (750 aa).

8 helical membrane passes run 70-93 (VFSA…FHGA), 156-179 (LYCT…FHYH), 195-219 (LNHH…HVSL), 291-309 (IAHH…GHMY), 346-369 (WHAQ…HHMY), 385-411 (LSLF…IFMV), 433-455 (AIIS…LYIH), and 531-549 (FLVH…LILL). [4Fe-4S] cluster contacts are provided by Cys573 and Cys582. The next 2 membrane-spanning stretches (helical) occupy residues 589–610 (HVFL…HFSW) and 664–686 (LSAY…MFLF). His675 is a binding site for chlorophyll a'. Residues Met683 and Tyr691 each contribute to the chlorophyll a site. Trp692 lines the phylloquinone pocket. Residues 724–744 (AVGVTHYLLGGIATTWAFFLA) traverse the membrane as a helical segment.

Belongs to the PsaA/PsaB family. As to quaternary structure, the PsaA/B heterodimer binds the P700 chlorophyll special pair and subsequent electron acceptors. PSI consists of a core antenna complex that captures photons, and an electron transfer chain that converts photonic excitation into a charge separation. The eukaryotic PSI reaction center is composed of at least 11 subunits. P700 is a chlorophyll a/chlorophyll a' dimer, A0 is one or more chlorophyll a, A1 is one or both phylloquinones and FX is a shared 4Fe-4S iron-sulfur center. serves as cofactor.

It is found in the plastid. Its subcellular location is the chloroplast thylakoid membrane. It catalyses the reaction reduced [plastocyanin] + hnu + oxidized [2Fe-2S]-[ferredoxin] = oxidized [plastocyanin] + reduced [2Fe-2S]-[ferredoxin]. In terms of biological role, psaA and PsaB bind P700, the primary electron donor of photosystem I (PSI), as well as the electron acceptors A0, A1 and FX. PSI is a plastocyanin-ferredoxin oxidoreductase, converting photonic excitation into a charge separation, which transfers an electron from the donor P700 chlorophyll pair to the spectroscopically characterized acceptors A0, A1, FX, FA and FB in turn. Oxidized P700 is reduced on the lumenal side of the thylakoid membrane by plastocyanin. This Lepidium virginicum (Virginia pepperweed) protein is Photosystem I P700 chlorophyll a apoprotein A1.